We begin with the raw amino-acid sequence, 206 residues long: Urease accessory protein UreG (206 aa).

14–21 is a binding site for GTP; sequence GPVGSGKT.

The protein belongs to the SIMIBI class G3E GTPase family. UreG subfamily. Homodimer. UreD, UreF and UreG form a complex that acts as a GTP-hydrolysis-dependent molecular chaperone, activating the urease apoprotein by helping to assemble the nickel containing metallocenter of UreC. The UreE protein probably delivers the nickel.

Its subcellular location is the cytoplasm. Facilitates the functional incorporation of the urease nickel metallocenter. This process requires GTP hydrolysis, probably effectuated by UreG. The chain is Urease accessory protein UreG from Brucella anthropi (strain ATCC 49188 / DSM 6882 / CCUG 24695 / JCM 21032 / LMG 3331 / NBRC 15819 / NCTC 12168 / Alc 37) (Ochrobactrum anthropi).